The chain runs to 160 residues: uncharacterized protein (160 aa).

This is an uncharacterized protein from Gracula (BFDV).